The primary structure comprises 301 residues: Bifunctional dTDP-4-dehydrorhamnose 3,5-epimerase/dTDP-4-dehydrorhamnose reductase (301 aa).

NADPH contacts are provided by residues 23-24 (WI), 69-71 (GVT), and Y111.

The protein belongs to the dTDP-4-dehydrorhamnose reductase family. In terms of tissue distribution, expressed in roots, leaves, stems and flowers.

It catalyses the reaction dTDP-4-dehydro-6-deoxy-alpha-D-glucose = dTDP-4-dehydro-beta-L-rhamnose. The enzyme catalyses dTDP-beta-L-rhamnose + NADP(+) = dTDP-4-dehydro-beta-L-rhamnose + NADPH + H(+). It functions in the pathway carbohydrate biosynthesis; dTDP-L-rhamnose biosynthesis. Its function is as follows. Bifunctional enzyme involved in dTDP-beta-L-rhamnose biosynthesis. Catalyzes the epimerization of the C3' and C5'positions of dTDP-6-deoxy-4-keto-alpha-D-glucose to form dTDP-4-keto-beta-L-rhamnose and its reduction to yield dTDP-beta-L-rhamnose. Can form UDP-beta-L-rhamnose from UDP-6-deoxy-4-keto-alpha-D-glucose, but cannot convert GDP-4-dehydro-6-deoxy-D-mannose to GDP-fucose. The polypeptide is Bifunctional dTDP-4-dehydrorhamnose 3,5-epimerase/dTDP-4-dehydrorhamnose reductase (Arabidopsis thaliana (Mouse-ear cress)).